A 176-amino-acid polypeptide reads, in one-letter code: NAD(P)H-quinone oxidoreductase subunit J (176 aa).

Polar residues-rich tracts occupy residues 1-12 (MEKDSQATSSDT) and 20-30 (ISQSLSKDGIP). The tract at residues 1–30 (MEKDSQATSSDTSIEKEGVISQSLSKDGIP) is disordered.

It belongs to the complex I 30 kDa subunit family. In terms of assembly, NDH-1 can be composed of about 15 different subunits; different subcomplexes with different compositions have been identified which probably have different functions.

Its subcellular location is the cellular thylakoid membrane. It catalyses the reaction a plastoquinone + NADH + (n+1) H(+)(in) = a plastoquinol + NAD(+) + n H(+)(out). The enzyme catalyses a plastoquinone + NADPH + (n+1) H(+)(in) = a plastoquinol + NADP(+) + n H(+)(out). NDH-1 shuttles electrons from an unknown electron donor, via FMN and iron-sulfur (Fe-S) centers, to quinones in the respiratory and/or the photosynthetic chain. The immediate electron acceptor for the enzyme in this species is believed to be plastoquinone. Couples the redox reaction to proton translocation, and thus conserves the redox energy in a proton gradient. Cyanobacterial NDH-1 also plays a role in inorganic carbon-concentration. The polypeptide is NAD(P)H-quinone oxidoreductase subunit J (Prochlorococcus marinus (strain AS9601)).